A 178-amino-acid polypeptide reads, in one-letter code: Bifunctional protein PyrR (178 aa).

Residues Val-97–Thr-109 carry the PRPP-binding motif.

Belongs to the purine/pyrimidine phosphoribosyltransferase family. PyrR subfamily.

It catalyses the reaction UMP + diphosphate = 5-phospho-alpha-D-ribose 1-diphosphate + uracil. Its function is as follows. Regulates the transcription of the pyrimidine nucleotide (pyr) operon in response to exogenous pyrimidines. In terms of biological role, also displays a weak uracil phosphoribosyltransferase activity which is not physiologically significant. The polypeptide is Bifunctional protein PyrR (Herpetosiphon aurantiacus (strain ATCC 23779 / DSM 785 / 114-95)).